We begin with the raw amino-acid sequence, 1076 residues long: Cytadherence high molecular weight protein 3 (1076 aa).

The fibronectin-binding stretch occupies residues 264–284 (QGYDQGYDQQYDQQGYDQQGY). Residues 326–335 (QQPVEVAKPA) are compositionally biased toward low complexity. The interval 326 to 351 (QQPVEVAKPAPTKPVGPKPQPGKKAT) is disordered. Residues 336-345 (PTKPVGPKPQ) show a composition bias toward pro residues. Residues 562–616 (EITKLEELVEIKTDNTESLNKLETLIDENKKIIDQFKQLKEEAKKSNSNINLEKV) adopt a coiled-coil conformation. Disordered stretches follow at residues 789-808 (SREH…TTRI) and 850-873 (RINP…EQQP). Residues 797–806 (PKAQHQQPTT) are compositionally biased toward polar residues. Residues 862 to 873 (YEQPDPYQEQQP) are compositionally biased toward low complexity.

The protein localises to the cell projection. Its subcellular location is the attachment organelle membrane. In terms of biological role, binds immobilized fibronectin. Its function is as follows. Component of the cytoskeleton-like structure which stabilizes the shape of the wall-less mycoplasma. This cytoskeleton-like network of accessory proteins containing HMW proteins 1 to 5 allows the proper anchoring of cytadhesin proteins in the mycoplasmal membrane at the attachment organelle. Essential for successful surface parasitism. The polypeptide is Cytadherence high molecular weight protein 3 (hlp3) (Mycoplasmoides gallisepticum (strain R(low / passage 15 / clone 2)) (Mycoplasma gallisepticum)).